A 338-amino-acid polypeptide reads, in one-letter code: Glycerol-3-phosphate dehydrogenase [NAD(P)+] (338 aa).

NADPH contacts are provided by Ser13, Trp14, and Lys108. The sn-glycerol 3-phosphate site is built by Lys108, Gly139, and Ser141. An NADPH-binding site is contributed by Ala143. Positions 194, 247, 257, 258, and 259 each coordinate sn-glycerol 3-phosphate. Lys194 (proton acceptor) is an active-site residue. Arg258 contributes to the NADPH binding site. Residues Val282 and Glu284 each contribute to the NADPH site.

Belongs to the NAD-dependent glycerol-3-phosphate dehydrogenase family.

It is found in the cytoplasm. It catalyses the reaction sn-glycerol 3-phosphate + NAD(+) = dihydroxyacetone phosphate + NADH + H(+). The catalysed reaction is sn-glycerol 3-phosphate + NADP(+) = dihydroxyacetone phosphate + NADPH + H(+). It functions in the pathway membrane lipid metabolism; glycerophospholipid metabolism. In terms of biological role, catalyzes the reduction of the glycolytic intermediate dihydroxyacetone phosphate (DHAP) to sn-glycerol 3-phosphate (G3P), the key precursor for phospholipid synthesis. This chain is Glycerol-3-phosphate dehydrogenase [NAD(P)+], found in Streptococcus pneumoniae (strain P1031).